The sequence spans 484 residues: MTRMVMLQGTGSDVGKTVLVAGLCRLARLHGRVVRPFKPQNMSNNAAVADDGGEIGRAQWLQALACGVPSSVHMNPVLLKPQSETGSQIIVQGRVFGQAKGRDYQRLKPQLLGAVLDSFEELKAGADLVIVEGAGSPAEINLRAGDIANMGFATRANVPVVLVGDIDRGGVIASLVGTHAILPEEDRRMISGYIINKFRGDQSLFADGIGAITQYTGWPSFGIVPWLKAAGRLPPEDSVALERLSRSSTGALKIAVPVLSRIANFDDFDPLASEPSVDLVYVRPGEPLPADAALVILPGSKATIGDLADLRAQGWDKDLTLHRRRGGRIIGICGGYQMLGNSVADPLGLEGAPCRVEGLGLLEIDTEMAPEKTVRNSAAHSLEYDMALSGYEIHLGQTDGPDCQRPALTIRGRADGAISADGKVMGTYLHGLFGNDEYRAALLQSFGISNGTVNYRQSVEQALDDLARELESVLDKAWLDQLIG.

One can recognise a GATase cobBQ-type domain in the interval 251-438; the sequence is ALKIAVPVLS…LHGLFGNDEY (188 aa). Catalysis depends on C333, which acts as the Nucleophile. H430 is a catalytic residue.

It belongs to the CobB/CobQ family. CobQ subfamily.

The protein operates within cofactor biosynthesis; adenosylcobalamin biosynthesis. Catalyzes amidations at positions B, D, E, and G on adenosylcobyrinic A,C-diamide. NH(2) groups are provided by glutamine, and one molecule of ATP is hydrogenolyzed for each amidation. This is Cobyric acid synthase from Allorhizobium ampelinum (strain ATCC BAA-846 / DSM 112012 / S4) (Agrobacterium vitis (strain S4)).